A 626-amino-acid chain; its full sequence is MSLISAVPLASSCVSKSLISSVREHTALRRAIATLQMSRRGKSVAASIRMSSATAGSDDGVKRRIGDYHSNLWDDNFIQSLSSPYGASSYGEHADRLIGEVKEIFNSFSIADGELISPVNDLLQQLWMVDNVERLGIDRHFQTEIKVALDYVYRYWSEEGIGCGRDSAFTDLNTTALAFRIFRLHGYTVSSDVFEHFKDQKGQFAASANDTELQTRSVFNLFRASLIAFPEEKVLEEAEKFAAAYLKAALQTLPVSGLSREIQYVFDYRWHSNLPRLEARSYIDILADNTISGTPDANTKKLLELAKLEFNIFHSVQQKELQCLWRWWKEWGCPELTFIRHRYVEFYTLVSGIDMVPEHATFRLSCVKTCHLITILDDMYDTFGTIDELRLFTAAVKRWDPSATECLPEYMKGVYMVLYETVNEMAKEAQKSQRRDTLGYVRQALEDYIGSYLKEAEWIATGYVPTFQEYFENGKLSSGHRIATLQPILTLSIPFPHHILQEIDFPSKFNDYAASILRLRGDTRCYKADSARGEEASCISCYMRDNPGSTQEDALNLINGMIEDMIKKLNWEFLRPDNNAPISSKKHAFNISRGLHHFYNYRDGYSVASKETKDLVIKTVLEPVLM.

The N-terminal 45 residues, 1–45, are a transit peptide targeting the chloroplast; that stretch reads MSLISAVPLASSCVSKSLISSVREHTALRRAIATLQMSRRGKSVA. Asp377, Asp381, and Asp529 together coordinate Mg(2+). The DDXXD motif motif lies at 377 to 381; the sequence is DDMYD.

It belongs to the terpene synthase family. Tpsd subfamily. It depends on Mg(2+) as a cofactor. Mn(2+) is required as a cofactor.

The protein resides in the plastid. Its subcellular location is the chloroplast. It catalyses the reaction (2E)-geranyl diphosphate = (+)-car-3-ene + diphosphate. It participates in terpene metabolism; oleoresin biosynthesis. Its pathway is secondary metabolite biosynthesis; terpenoid biosynthesis. Functionally, monoterpene synthase (TPS) involved in the biosynthesis of monoterpene natural products included in conifer oleoresin secretions and volatile emissions; these compounds contribute to biotic and abiotic stress defense against herbivores and pathogens. Catalyzes the conversion of (2E)-geranyl diphosphate (GPP) to (+)-3-carene. The polypeptide is (+)-3-carene synthase 2, chloroplastic (Pinus banksiana (Jack pine)).